Reading from the N-terminus, the 382-residue chain is RNA binding protein fox-1 homolog 1-like (382 aa).

Disordered stretches follow at residues 34-79 and 94-148; these read QEAG…AAHP and GPQH…QPKR. Pro residues predominate over residues 49–65; the sequence is YAPPPSYPPPGQAPPTP. Over residues 101–110 the composition is skewed to polar residues; sequence ESITASNTDD. In terms of domain architecture, RRM spans 147–223; the sequence is KRLHVSNIPF…RKIEVNNATA (77 aa).

As to expression, expressed during muscle development in adaxial cells, somites, cardiac precursors, finbuds and jaw muscle cells.

It is found in the nucleus. Functionally, RNA-binding protein that regulates alternative splicing events by binding to 5'-GCAUG-3' elements. Regulates alternative splicing of tissue-specific exons. The chain is RNA binding protein fox-1 homolog 1-like (rbfox1l) from Danio rerio (Zebrafish).